We begin with the raw amino-acid sequence, 1686 residues long: Gag-Pol polyprotein (1686 aa).

Gly-2 is lipidated: N-myristoyl glycine; by host. 2 disordered regions span residues 110-199 (RPVA…PLRA) and 419-486 (HKRE…RPPL). The PTAP/PSAP motif motif lies at 116–119 (PSAP). The segment covering 137 to 151 (PTPPPYPAALPPPLA) has biased composition (pro residues). The PPXY motif signature appears at 139-142 (PPPY). The stretch at 407-444 (LQDLVKEAEKVYHKRETEEERQEREKKEAEEKERRRDR) forms a coiled coil. Basic and acidic residues predominate over residues 419–442 (HKRETEEERQEREKKEAEEKERRR). Positions 461–476 (EGSTGRQTGNLSNQAK) are enriched in polar residues. The CCHC-type zinc-finger motif lies at 489-506 (DQCAYCKEKGHWARECPR). Positions 543-613 (IEFLVDTGAE…CPAPLLGRDL (71 aa)) constitute a Peptidase A2 domain. Residue Asp-548 is the Protease; shared with dimeric partner of the active site. The Reverse transcriptase domain maps to 720 to 911 (LDLGVLVPCR…REVTYLGYLL (192 aa)). Residues Asp-788, Asp-862, Asp-863, Asp-1161, Glu-1199, Asp-1220, and Asp-1290 each coordinate Mg(2+). One can recognise an RNase H type-1 domain in the interval 1152–1298 (LPGVPTWYTD…ADEAAKQAAL (147 aa)). Residues 1304-1325 (AGTTKPQEPIEPAQEKTRPREL) form a disordered region. Residues 1316–1325 (AQEKTRPREL) are compositionally biased toward basic and acidic residues. The HHCC-type zinc finger occupies 1338–1376 (HQLTHLGPEKLLQLVNRTSLLIPNLQSAVREVTSQCQAC). The 159-residue stretch at 1393-1551 (RGDRPGVYWE…TPYEILYGGP (159 aa)) folds into the Integrase catalytic domain. Positions 1404 and 1463 each coordinate Mg(2+).

The protein belongs to the retroviral Pol polyprotein family. In terms of assembly, homohexamer; further associates as homomultimer. The virus core is composed of a lattice formed from hexagonal rings, each containing six capsid monomers. Interacts (via PPXY motif) with host NEDD4. Interacts (via PSAP motif) with host TSG101. As to quaternary structure, the reverse transcriptase is a monomer (Potential). Interacts (via RNase domains) with host release factor ETF1; this interaction is essential for translational readthrough of amber codon between viral gag and pol genes, as well as for viral replication. In terms of assembly, homodimer. Mg(2+) is required as a cofactor. Specific enzymatic cleavages by the viral protease yield mature proteins. The protease is released by autocatalytic cleavage. The polyprotein is cleaved during and after budding, this process is termed maturation. In terms of processing, phosphorylated on serine residues.

The protein resides in the virion. It is found in the host cell membrane. Its subcellular location is the host late endosome membrane. It localises to the host endosome. The protein localises to the host multivesicular body. The protein resides in the host cytoplasm. It catalyses the reaction DNA(n) + a 2'-deoxyribonucleoside 5'-triphosphate = DNA(n+1) + diphosphate. It carries out the reaction Endonucleolytic cleavage to 5'-phosphomonoester.. Most efficiently inhibited by Amprenavir, which is able to block Gag-Pol processing in infected cells. Functionally, plays a role in budding and is processed by the viral protease during virion maturation outside the cell. During budding, it recruits, in a PPXY-dependent or independent manner, Nedd4-like ubiquitin ligases that conjugate ubiquitin molecules to Gag-Pol, or to Gag-Pol binding host factors. Interaction with HECT ubiquitin ligases probably links the viral protein to the host ESCRT pathway and facilitates release. In terms of biological role, targets Gag and gag-pol polyproteins to the plasma membrane via a multipartite membrane binding signal, that includes its myristoylated N-terminus. Also mediates nuclear localization of the pre-integration complex. Constituent of the pre-integration complex (PIC) which tethers the latter to mitotic chromosomes. This allows the integration of the viral genome into the host DNA. Its function is as follows. Forms the spherical core of the virion that encapsulates the genomic RNA-nucleocapsid complex. Functionally, involved in the packaging and encapsidation of two copies of the genome. Binds with high affinity to conserved UCUG elements within the packaging signal, located near the 5'-end of the genome. This binding is dependent on genome dimerization. Acts as a nucleic acid chaperone which is involved in rearrangement of nucleic acid secondary structures during gRNA retrotranscription. In terms of biological role, the aspartyl protease mediates proteolytic cleavages of Gag and Gag-Pol polyproteins during or shortly after the release of the virion from the plasma membrane. Cleavages take place as an ordered, step-wise cascade to yield mature proteins. This process is called maturation. Displays maximal activity during the budding process just prior to particle release from the cell. RT is a multifunctional enzyme that converts the viral dimeric RNA genome into dsDNA in the cytoplasm, shortly after virus entry into the cell. This enzyme displays a DNA polymerase activity that can copy either DNA or RNA templates, and a ribonuclease H (RNase H) activity that cleaves the RNA strand of RNA-DNA heteroduplexes in a partially processive 3' to 5' endonucleasic mode. Conversion of viral genomic RNA into dsDNA requires many steps. A tRNA binds to the primer-binding site (PBS) situated at the 5' end of the viral RNA. RT uses the 3' end of the tRNA primer to perform a short round of RNA-dependent minus-strand DNA synthesis. The reading proceeds through the U5 region and ends after the repeated (R) region which is present at both ends of viral RNA. The portion of the RNA-DNA heteroduplex is digested by the RNase H, resulting in a ssDNA product attached to the tRNA primer. This ssDNA/tRNA hybridizes with the identical R region situated at the 3' end of viral RNA. This template exchange, known as minus-strand DNA strong stop transfer, can be either intra- or intermolecular. RT uses the 3' end of this newly synthesized short ssDNA to perform the RNA-dependent minus-strand DNA synthesis of the whole template. RNase H digests the RNA template except for a polypurine tract (PPT) situated at the 5' end of the genome. It is not clear if both polymerase and RNase H activities are simultaneous. RNase H probably can proceed both in a polymerase-dependent (RNA cut into small fragments by the same RT performing DNA synthesis) and a polymerase-independent mode (cleavage of remaining RNA fragments by free RTs). Secondly, RT performs DNA-directed plus-strand DNA synthesis using the PPT that has not been removed by RNase H as primers. PPT and tRNA primers are then removed by RNase H. The 3' and 5' ssDNA PBS regions hybridize to form a circular dsDNA intermediate. Strand displacement synthesis by RT to the PBS and PPT ends produces a blunt ended, linear dsDNA copy of the viral genome that includes long terminal repeats (LTRs) at both ends. Its function is as follows. Catalyzes viral DNA integration into the host chromosome, by performing a series of DNA cutting and joining reactions. This enzyme activity takes place after virion entry into a cell and reverse transcription of the RNA genome in dsDNA. The first step in the integration process is 3' processing. This step requires a complex comprising the viral genome, matrix protein and integrase. This complex is called the pre-integration complex (PIC). The integrase protein removes 2 nucleotides from each 3' end of the viral DNA, leaving recessed CA OH's at the 3' ends. In the second step that requires cell division, the PIC enters cell nucleus. In the third step, termed strand transfer, the integrase protein joins the previously processed 3' ends to the 5' ends of strands of target cellular DNA at the site of integration. The last step is viral DNA integration into host chromosome. The chain is Gag-Pol polyprotein (pol) from Hylobatidae (gibbons).